The following is a 475-amino-acid chain: Ataxin-10 (475 aa).

Arginine 10 is subject to Omega-N-methylarginine. At serine 12 the chain carries Phosphoserine; by AURKB. Serine 77 bears the Phosphoserine; by PLK1 mark. Threonine 82 is modified (phosphothreonine; by PLK1). Position 430 is a phosphoserine (serine 430).

It belongs to the ataxin-10 family. As to quaternary structure, homooligomer. Interacts with GNB2. Interacts with IQCB1. Interacts with OGT. In terms of processing, polyubiquitinated. Post-translationally, phosphorylation at Ser-12 by AURKB promotes the association of ATXN10 with PLK1. Phosphorylation at Ser-77 and Thr-82 by PLK1 may play a role in the regulation of cytokinesis and may stimulate the proteasome-mediated degradation of ATXN10. As to expression, expressed in the central nervous system.

The protein resides in the cytoplasm. Its subcellular location is the perinuclear region. It localises to the midbody. The protein localises to the cytoskeleton. It is found in the cilium basal body. The protein resides in the microtubule organizing center. Its subcellular location is the centrosome. It localises to the centriole. May play a role in the regulation of cytokinesis. May play a role in signaling by stimulating protein glycosylation. Induces neuritogenesis by activating the Ras-MAP kinase pathway and is necessary for the survival of cerebellar neurons. Does not appear to play a major role in ciliogenesis. This chain is Ataxin-10 (ATXN10), found in Homo sapiens (Human).